The primary structure comprises 434 residues: [Pyruvate dehydrogenase (acetyl-transferring)] kinase isozyme 1, mitochondrial (434 aa).

The N-terminal 26 residues, 1-26, are a transit peptide targeting the mitochondrion; the sequence is MRLARLLRGGTSVRPLCAVPCASRSL. Residue tyrosine 136 is modified to Phosphotyrosine; by FGFR1. Positions 161 to 391 constitute a Histidine kinase domain; sequence TEYKESFGVD…DAVIYIKALS (231 aa). The residue at position 241 (tyrosine 241) is a Phosphotyrosine; by FGFR1, ABL1, FLT3 and JAK2. Residue tyrosine 242 is modified to Phosphotyrosine; by FGFR1. ATP is bound by residues 277 to 284, aspartate 316, 335 to 336, and 352 to 357; these read ELFKNAMR, ST, and GFGYGL. Threonine 336 carries the post-translational modification Phosphothreonine. At lysine 403 the chain carries N6-succinyllysine.

It belongs to the PDK/BCKDK protein kinase family. Homodimer, and heterodimer with PDK2. Interacts with the pyruvate dehydrogenase complex subunit DLAT, and is part of the multimeric pyruvate dehydrogenase complex that contains multiple copies of pyruvate dehydrogenase (E1), dihydrolipoamide acetyltransferase (DLAT, E2) and lipoamide dehydrogenase (DLD, E3). Interacts with phosphoglycerate kinase PGK1; the interaction is direct, occurs under hypoxic conditions and leads to PDK1-mediated inhibition of pyruvate dehydrogenase complex activity. In terms of processing, phosphorylated by constitutively activated ABL1, FGFR1, FLT3 and JAK2 (in vitro), and this may also occur in cancer cells that express constitutively activated ABL1, FGFR1, FLT3 and JAK2. Phosphorylation at Tyr-241 and Tyr-242 strongly increases kinase activity, while phosphorylation at Tyr-136 has a lesser effect. Phosphorylated under hypoxic conditions at Thr-336 by phosphoglycerate kinase PGK1 which has an activating effect.

It localises to the mitochondrion matrix. It carries out the reaction L-seryl-[pyruvate dehydrogenase E1 alpha subunit] + ATP = O-phospho-L-seryl-[pyruvate dehydrogenase E1 alpha subunit] + ADP + H(+). Functionally, kinase that plays a key role in regulation of glucose and fatty acid metabolism and homeostasis via phosphorylation of the pyruvate dehydrogenase subunits PDHA1 and PDHA2. This inhibits pyruvate dehydrogenase activity, and thereby regulates metabolite flux through the tricarboxylic acid cycle, down-regulates aerobic respiration and inhibits the formation of acetyl-coenzyme A from pyruvate. Plays an important role in cellular responses to hypoxia and is important for cell proliferation under hypoxia. This chain is [Pyruvate dehydrogenase (acetyl-transferring)] kinase isozyme 1, mitochondrial (Pdk1), found in Mus musculus (Mouse).